Reading from the N-terminus, the 618-residue chain is UvrABC system protein C (618 aa).

Positions 13 to 92 (DKPGVYLMKN…IKKYRPKYNI (80 aa)) constitute a GIY-YIG domain. In terms of domain architecture, UVR spans 204–239 (LDIVENFKLNMEKAAENLEFEKAAMLRDKINIIEKI).

Belongs to the UvrC family. Interacts with UvrB in an incision complex.

The protein resides in the cytoplasm. In terms of biological role, the UvrABC repair system catalyzes the recognition and processing of DNA lesions. UvrC both incises the 5' and 3' sides of the lesion. The N-terminal half is responsible for the 3' incision and the C-terminal half is responsible for the 5' incision. The protein is UvrABC system protein C of Clostridium botulinum (strain ATCC 19397 / Type A).